Here is a 188-residue protein sequence, read N- to C-terminus: Large ribosomal subunit protein bL32m (188 aa).

The Zn(2+) site is built by cysteine 110, cysteine 113, cysteine 123, and cysteine 126. Positions 164–188 are disordered; sequence TPSEQDQGKRIIERDRKRPSWFTQN. Basic and acidic residues predominate over residues 169-181; that stretch reads DQGKRIIERDRKR.

It belongs to the bacterial ribosomal protein bL32 family. In terms of assembly, component of the mitochondrial large ribosomal subunit (mt-LSU). Mature mammalian 55S mitochondrial ribosomes consist of a small (28S) and a large (39S) subunit. The 28S small subunit contains a 12S ribosomal RNA (12S mt-rRNA) and 30 different proteins. The 39S large subunit contains a 16S rRNA (16S mt-rRNA), a copy of mitochondrial valine transfer RNA (mt-tRNA(Val)), which plays an integral structural role, and 52 different proteins. bL32m has a zinc binding site. In terms of processing, MRPL32 precursor is processed by the m-AAA protease (composed of AFG3L2 and SPG7), which cleaves the N-terminal transit peptide. Cleavage by the m-AAA protease takes place prior to assembly into the large subunit, an essential step for mitochondrial ribosome (mitoribosome) assembly. Proper processing by the m-AAA protease is dependent on the zinc-binding region within the tightly folded C-terminal domain of MRPL32: zinc-dependent folding halts degradation initiated from the N-terminus and triggers the release of mature MRPL32.

The protein localises to the mitochondrion. In terms of biological role, component of the mitochondrial large ribosomal subunit (mt-LSU). The mitochondrial ribosome (mitoribosome) is a large ribonucleoprotein complex responsible for the synthesis of proteins inside mitochondria. The polypeptide is Large ribosomal subunit protein bL32m (MRPL32) (Homo sapiens (Human)).